Reading from the N-terminus, the 258-residue chain is MLKTRIIPCLDVKDGRVVKGVQFLELRDAGDPVESAKAYDAAGADELCFLDITASHEARGTLLDVVSRTAEACFMPLTVGGGVRTVADVRTLLLAGADKVGINTAAVKNPDFVAEAAEKFGDQCIVVAIDAKRVSGPDEAARWEIFTHGGRNPTGIDAVEFARTVSERGAGELLVTSMDKDGTRSGYDLALTRAIADAVRVPVIASGGVGGLDDLVAGVRDGGASAVLAASIFHFGQHTVGEAKAHMAAAGLAMRLDP.

Residues aspartate 11 and aspartate 130 contribute to the active site.

Belongs to the HisA/HisF family. In terms of assembly, heterodimer of HisH and HisF.

Its subcellular location is the cytoplasm. The catalysed reaction is 5-[(5-phospho-1-deoxy-D-ribulos-1-ylimino)methylamino]-1-(5-phospho-beta-D-ribosyl)imidazole-4-carboxamide + L-glutamine = D-erythro-1-(imidazol-4-yl)glycerol 3-phosphate + 5-amino-1-(5-phospho-beta-D-ribosyl)imidazole-4-carboxamide + L-glutamate + H(+). It participates in amino-acid biosynthesis; L-histidine biosynthesis; L-histidine from 5-phospho-alpha-D-ribose 1-diphosphate: step 5/9. Functionally, IGPS catalyzes the conversion of PRFAR and glutamine to IGP, AICAR and glutamate. The HisF subunit catalyzes the cyclization activity that produces IGP and AICAR from PRFAR using the ammonia provided by the HisH subunit. This Methylorubrum extorquens (strain CM4 / NCIMB 13688) (Methylobacterium extorquens) protein is Imidazole glycerol phosphate synthase subunit HisF.